Consider the following 154-residue polypeptide: Myoglobin (154 aa).

In terms of domain architecture, Globin spans 2 to 148; it reads GLSEGEWQLV…FRKDIAAKYK (147 aa). Phosphoserine is present on S4. A nitrite-binding site is contributed by H65. O2 is bound at residue H65. Residue T68 is modified to Phosphothreonine. Residue H94 participates in heme b binding.

Monomer.

The protein resides in the cytoplasm. It localises to the sarcoplasm. It catalyses the reaction Fe(III)-heme b-[protein] + nitric oxide + H2O = Fe(II)-heme b-[protein] + nitrite + 2 H(+). The enzyme catalyses H2O2 + AH2 = A + 2 H2O. In terms of biological role, monomeric heme protein which primary function is to store oxygen and facilitate its diffusion within muscle tissues. Reversibly binds oxygen through a pentacoordinated heme iron and enables its timely and efficient release as needed during periods of heightened demand. Depending on the oxidative conditions of tissues and cells, and in addition to its ability to bind oxygen, it also has a nitrite reductase activity whereby it regulates the production of bioactive nitric oxide. Under stress conditions, like hypoxia and anoxia, it also protects cells against reactive oxygen species thanks to its pseudoperoxidase activity. This is Myoglobin (MB) from Delphinapterus leucas (Beluga whale).